Reading from the N-terminus, the 525-residue chain is Bestrophin homolog 15 (525 aa).

4 helical membrane-spanning segments follow: residues 36–56 (LFMF…NLII), 71–91 (FDQN…VTII), 237–257 (LAYP…ALIA), and 273–293 (ILYP…VVGW).

Belongs to the anion channel-forming bestrophin (TC 1.A.46) family. Calcium-sensitive chloride channel subfamily. Forms oligomers.

It localises to the cell membrane. In terms of biological role, forms chloride channels. The chain is Bestrophin homolog 15 (best-15) from Caenorhabditis elegans.